A 223-amino-acid polypeptide reads, in one-letter code: Cytidylate kinase (223 aa).

Residue 10–18 participates in ATP binding; it reads GPAGTGKSS.

Belongs to the cytidylate kinase family. Type 1 subfamily.

Its subcellular location is the cytoplasm. The catalysed reaction is CMP + ATP = CDP + ADP. It catalyses the reaction dCMP + ATP = dCDP + ADP. The chain is Cytidylate kinase from Mycobacterium leprae (strain Br4923).